Reading from the N-terminus, the 420-residue chain is Putative phosphate permease HI_1604 (420 aa).

The next 12 membrane-spanning stretches (helical) occupy residues 8 to 28 (GSWL…GIGA), 49 to 69 (AIII…GEVT), 88 to 108 (ILAL…FIAT), 112 to 132 (WPVS…CITI), 145 to 165 (IVGS…AIFA), 185 to 205 (GPYY…KKGL), 216 to 236 (ETLI…HFYF), 250 to 270 (FGAV…AMAF), 300 to 320 (GGAL…VGLI), 343 to 363 (FAAQ…GLPI), 370 to 390 (VGAI…LTVI), and 393 to 413 (IISS…IIFY).

Belongs to the inorganic phosphate transporter (PiT) (TC 2.A.20) family.

The protein localises to the cell inner membrane. Functionally, potential transporter for phosphate. This is Putative phosphate permease HI_1604 from Haemophilus influenzae (strain ATCC 51907 / DSM 11121 / KW20 / Rd).